The following is a 164-amino-acid chain: uncharacterized protein (164 aa).

4 helical membrane passes run 25 to 45 (QFGF…PLLG), 63 to 83 (GMAV…VYIV), 120 to 140 (FWTA…ADFF), and 141 to 161 (TVQM…LMMM).

This sequence belongs to the major facilitator superfamily.

It is found in the cell membrane. This is an uncharacterized protein from Bacillus subtilis (strain 168).